The primary structure comprises 199 residues: Recombination protein RecR (199 aa).

The segment at Cys57 to Cys72 adopts a C4-type zinc-finger fold. Residues Arg80–Pro175 form the Toprim domain.

It belongs to the RecR family.

In terms of biological role, may play a role in DNA repair. It seems to be involved in an RecBC-independent recombinational process of DNA repair. It may act with RecF and RecO. The sequence is that of Recombination protein RecR from Carboxydothermus hydrogenoformans (strain ATCC BAA-161 / DSM 6008 / Z-2901).